The following is a 263-amino-acid chain: ATP synthase subunit a (263 aa).

6 helical membrane passes run 26 to 46, 86 to 106, 130 to 150, 166 to 186, 195 to 215, and 229 to 249; these read VHLD…FFFS, VAPL…IDLI, DISA…FYTI, PFNH…TLLA, LFGN…MYMA, and LAWA…FMML.

Belongs to the ATPase A chain family. F-type ATPases have 2 components, CF(1) - the catalytic core - and CF(0) - the membrane proton channel. CF(1) has five subunits: alpha(3), beta(3), gamma(1), delta(1), epsilon(1). CF(0) has three main subunits: a(1), b(2) and c(9-12). The alpha and beta chains form an alternating ring which encloses part of the gamma chain. CF(1) is attached to CF(0) by a central stalk formed by the gamma and epsilon chains, while a peripheral stalk is formed by the delta and b chains.

Its subcellular location is the cell inner membrane. Key component of the proton channel; it plays a direct role in the translocation of protons across the membrane. The chain is ATP synthase subunit a from Glaesserella parasuis serovar 5 (strain SH0165) (Haemophilus parasuis).